Consider the following 128-residue polypeptide: Large ribosomal subunit protein bL17 (128 aa).

It belongs to the bacterial ribosomal protein bL17 family. Part of the 50S ribosomal subunit. Contacts protein L32.

The protein is Large ribosomal subunit protein bL17 of Streptococcus equi subsp. equi (strain 4047).